The primary structure comprises 264 residues: Thymidylate synthase (264 aa).

Position 21 (R21) interacts with dUMP. H51 contributes to the (6R)-5,10-methylene-5,6,7,8-tetrahydrofolate binding site. Residue 126-127 (RR) participates in dUMP binding. The active-site Nucleophile is C146. DUMP is bound by residues 166 to 169 (RSGD), N177, and 207 to 209 (HIY). D169 contacts (6R)-5,10-methylene-5,6,7,8-tetrahydrofolate. A263 is a binding site for (6R)-5,10-methylene-5,6,7,8-tetrahydrofolate.

It belongs to the thymidylate synthase family. Bacterial-type ThyA subfamily. As to quaternary structure, homodimer.

It is found in the cytoplasm. The enzyme catalyses dUMP + (6R)-5,10-methylene-5,6,7,8-tetrahydrofolate = 7,8-dihydrofolate + dTMP. Its pathway is pyrimidine metabolism; dTTP biosynthesis. Its function is as follows. Catalyzes the reductive methylation of 2'-deoxyuridine-5'-monophosphate (dUMP) to 2'-deoxythymidine-5'-monophosphate (dTMP) while utilizing 5,10-methylenetetrahydrofolate (mTHF) as the methyl donor and reductant in the reaction, yielding dihydrofolate (DHF) as a by-product. This enzymatic reaction provides an intracellular de novo source of dTMP, an essential precursor for DNA biosynthesis. In Sinorhizobium medicae (strain WSM419) (Ensifer medicae), this protein is Thymidylate synthase.